We begin with the raw amino-acid sequence, 241 residues long: 2-C-methyl-D-erythritol 4-phosphate cytidylyltransferase (241 aa).

The protein belongs to the IspD/TarI cytidylyltransferase family. IspD subfamily.

The catalysed reaction is 2-C-methyl-D-erythritol 4-phosphate + CTP + H(+) = 4-CDP-2-C-methyl-D-erythritol + diphosphate. It participates in isoprenoid biosynthesis; isopentenyl diphosphate biosynthesis via DXP pathway; isopentenyl diphosphate from 1-deoxy-D-xylulose 5-phosphate: step 2/6. In terms of biological role, catalyzes the formation of 4-diphosphocytidyl-2-C-methyl-D-erythritol from CTP and 2-C-methyl-D-erythritol 4-phosphate (MEP). The polypeptide is 2-C-methyl-D-erythritol 4-phosphate cytidylyltransferase (Mycobacterium leprae (strain Br4923)).